An 873-amino-acid chain; its full sequence is Bifunctional uridylyltransferase/uridylyl-removing enzyme (873 aa).

The uridylyltransferase stretch occupies residues 1 to 332; the sequence is MKYLSPLSLS…HQGEQDDAII (332 aa). Residues 333 to 692 are uridylyl-removing; sequence IDDDFQRRGR…ISKNASRGGT (360 aa). Residues 451 to 573 enclose the HD domain; sequence VDEHSIRLLK…VRDEERLDYL (123 aa). 2 ACT domains span residues 693-777 and 800-873; these read EIFV…RPPR and LMEF…RLSS.

Belongs to the GlnD family. It depends on Mg(2+) as a cofactor.

The enzyme catalyses [protein-PII]-L-tyrosine + UTP = [protein-PII]-uridylyl-L-tyrosine + diphosphate. It carries out the reaction [protein-PII]-uridylyl-L-tyrosine + H2O = [protein-PII]-L-tyrosine + UMP + H(+). Its activity is regulated as follows. Uridylyltransferase (UTase) activity is inhibited by glutamine, while glutamine activates uridylyl-removing (UR) activity. Its function is as follows. Modifies, by uridylylation and deuridylylation, the PII regulatory proteins (GlnB and homologs), in response to the nitrogen status of the cell that GlnD senses through the glutamine level. Under low glutamine levels, catalyzes the conversion of the PII proteins and UTP to PII-UMP and PPi, while under higher glutamine levels, GlnD hydrolyzes PII-UMP to PII and UMP (deuridylylation). Thus, controls uridylylation state and activity of the PII proteins, and plays an important role in the regulation of nitrogen assimilation and metabolism. The polypeptide is Bifunctional uridylyltransferase/uridylyl-removing enzyme (Aliivibrio fischeri (strain MJ11) (Vibrio fischeri)).